The chain runs to 633 residues: Probable potassium transport system protein Kup 2 (633 aa).

A run of 12 helical transmembrane segments spans residues 18-38 (FLAL…TSPL), 61-81 (LVSL…VLFL), 107-127 (PVLM…DAMI), 143-163 (VAPA…LLLF), 173-193 (VSVF…AAGV), 211-231 (AIGF…AIFL), 255-275 (WFAV…ALVL), 287-307 (LMFP…ATII), 345-365 (IYLP…MLMF), 371-391 (LAPA…ILAF), 402-422 (ALTA…FLGA), and 427-447 (VHHG…MMWT).

This sequence belongs to the HAK/KUP transporter (TC 2.A.72) family.

The protein localises to the cell inner membrane. The catalysed reaction is K(+)(in) + H(+)(in) = K(+)(out) + H(+)(out). Its function is as follows. Transport of potassium into the cell. Likely operates as a K(+):H(+) symporter. This Rhizobium meliloti (strain 1021) (Ensifer meliloti) protein is Probable potassium transport system protein Kup 2.